The following is a 208-amino-acid chain: 2-phospho-L-lactate guanylyltransferase (208 aa).

This sequence belongs to the CofC family. As to quaternary structure, homodimer.

The catalysed reaction is (2S)-2-phospholactate + GTP + H(+) = (2S)-lactyl-2-diphospho-5'-guanosine + diphosphate. The protein operates within cofactor biosynthesis; coenzyme F420 biosynthesis. Its function is as follows. Guanylyltransferase that catalyzes the activation of (2S)-2-phospholactate (2-PL) as (2S)-lactyl-2-diphospho-5'-guanosine, via the condensation of 2-PL with GTP. It is involved in the biosynthesis of coenzyme F420, a hydride carrier cofactor. The protein is 2-phospho-L-lactate guanylyltransferase of Methanosarcina mazei (strain ATCC BAA-159 / DSM 3647 / Goe1 / Go1 / JCM 11833 / OCM 88) (Methanosarcina frisia).